We begin with the raw amino-acid sequence, 690 residues long: Iron-sulfur clusters transporter ATM1, mitochondrial (690 aa).

The transit peptide at 1 to 26 (MLLLPRCPVIGRIVRSKFRSGLIRNH) directs the protein to the mitochondrion. Residues 27 to 110 (SPVIFTVSKL…PKGNNKVRIR (84 aa)) lie on the Mitochondrial matrix side of the membrane. The helical transmembrane segment at 111–132 (VLIALGLLISAKILNVQVPFFF) threads the bilayer. An ABC transmembrane type-1 domain is found at 111–401 (VLIALGLLIS…LGSVYRDLKQ (291 aa)). At 133–155 (KQTIDSMNIAWDDPTVALPAAIG) the chain is on the mitochondrial intermembrane side. The chain crosses the membrane as a helical span at residues 156 to 179 (LTILCYGVARFGSVLFGELRNAVF). Residues 180 to 228 (AKVAQNAIRTVSLQTFQHLMKLDLGWHLSRQTGGLTRAMDRGTKGISQV) lie on the Mitochondrial matrix side of the membrane. Residues 229-252 (LTAMVFHIIPISFEISVVCGILTY) form a helical membrane-spanning segment. Glutamine 253 is a topological domain (mitochondrial intermembrane). The helical transmembrane segment at 254–274 (FGASFAAITFSTMLLYSIFTI) threads the bilayer. Residues 275–340 (KTTAWRTHFR…SQIKVSQSLA (66 aa)) lie on the Mitochondrial matrix side of the membrane. Residues 280–284 (RTHFR) and 343–346 (NSGQ) contribute to the glutathione site. Residues 341 to 359 (FLNSGQNLIFTTALTAMMY) form a helical membrane-spanning segment. At 360-374 (MGCTGVIGGNLTVGD) the chain is on the mitochondrial intermembrane side. A helical transmembrane segment spans residues 375 to 396 (LVLINQLVFQLSVPLNFLGSVY). A glutathione-binding site is contributed by glycine 393. Residues 397 to 690 (RDLKQSLIDM…ENELKDQQEL (294 aa)) are Mitochondrial matrix-facing. The region spanning 436 to 672 (ITFENVTFGY…PGSLYRELWT (237 aa)) is the ABC transporter domain. Residues tyrosine 445 and 469-480 (GSSGSGKSTILK) each bind ATP.

Belongs to the ABC transporter superfamily. ABCB family. Heavy Metal importer (TC 3.A.1.210) subfamily. As to quaternary structure, homodimer.

It is found in the mitochondrion inner membrane. In terms of biological role, performs an essential function in the generation of cytoplasmic iron-sulfur proteins by mediating the ATP-dependent export of Fe/S cluster precursors synthesized by NFS1 and other mitochondrial proteins. Hydrolyzes ATP. Binds glutathione and may function by transporting a glutathione-conjugated iron-sulfur compound. The protein is Iron-sulfur clusters transporter ATM1, mitochondrial of Saccharomyces cerevisiae (strain ATCC 204508 / S288c) (Baker's yeast).